The sequence spans 125 residues: Calcitonin receptor-stimulating peptide 1 (125 aa).

The signal sequence occupies residues Met-1–Ala-25. Residues Ala-26–Gln-77 constitute a propeptide that is removed on maturation. Residues Cys-81 and Cys-86 are joined by a disulfide bond.

This sequence belongs to the calcitonin family.

It is found in the secreted. Functionally, stimulates cAMP production in porcine kidney cell line LLC-PK1 via the calcitonin receptor (CT) but not via the CT-like (CL) receptor. The sequence is that of Calcitonin receptor-stimulating peptide 1 (CRSP1) from Capra hircus (Goat).